Reading from the N-terminus, the 455-residue chain is Bifunctional protein GlmU (455 aa).

A pyrophosphorylase region spans residues 1–232; that stretch reads MASITGALIL…DPNLLGVNDP (232 aa). UDP-N-acetyl-alpha-D-glucosamine-binding positions include 10–13, lysine 24, glutamine 75, and 80–81; these read LAAG and GT. Residue aspartate 106 coordinates Mg(2+). Positions 141, 155, 172, and 230 each coordinate UDP-N-acetyl-alpha-D-glucosamine. Position 230 (asparagine 230) interacts with Mg(2+). The segment at 233–253 is linker; it reads AELIRSEALVRARIALNWIEK. Residues 254-455 are N-acetyltransferase; that stretch reads RVLIHAPETV…QTTLPRRRNS (202 aa). UDP-N-acetyl-alpha-D-glucosamine-binding residues include arginine 336 and lysine 354. Histidine 366 acts as the Proton acceptor in catalysis. Residues tyrosine 369 and asparagine 380 each contribute to the UDP-N-acetyl-alpha-D-glucosamine site. Acetyl-CoA-binding positions include alanine 383, 389 to 390, serine 408, alanine 426, and arginine 443; that span reads NY.

The protein in the N-terminal section; belongs to the N-acetylglucosamine-1-phosphate uridyltransferase family. This sequence in the C-terminal section; belongs to the transferase hexapeptide repeat family. As to quaternary structure, homotrimer. Mg(2+) is required as a cofactor.

Its subcellular location is the cytoplasm. It catalyses the reaction alpha-D-glucosamine 1-phosphate + acetyl-CoA = N-acetyl-alpha-D-glucosamine 1-phosphate + CoA + H(+). It carries out the reaction N-acetyl-alpha-D-glucosamine 1-phosphate + UTP + H(+) = UDP-N-acetyl-alpha-D-glucosamine + diphosphate. Its pathway is nucleotide-sugar biosynthesis; UDP-N-acetyl-alpha-D-glucosamine biosynthesis; N-acetyl-alpha-D-glucosamine 1-phosphate from alpha-D-glucosamine 6-phosphate (route II): step 2/2. The protein operates within nucleotide-sugar biosynthesis; UDP-N-acetyl-alpha-D-glucosamine biosynthesis; UDP-N-acetyl-alpha-D-glucosamine from N-acetyl-alpha-D-glucosamine 1-phosphate: step 1/1. It participates in bacterial outer membrane biogenesis; LPS lipid A biosynthesis. Its function is as follows. Catalyzes the last two sequential reactions in the de novo biosynthetic pathway for UDP-N-acetylglucosamine (UDP-GlcNAc). The C-terminal domain catalyzes the transfer of acetyl group from acetyl coenzyme A to glucosamine-1-phosphate (GlcN-1-P) to produce N-acetylglucosamine-1-phosphate (GlcNAc-1-P), which is converted into UDP-GlcNAc by the transfer of uridine 5-monophosphate (from uridine 5-triphosphate), a reaction catalyzed by the N-terminal domain. This Nitratidesulfovibrio vulgaris (strain DSM 19637 / Miyazaki F) (Desulfovibrio vulgaris) protein is Bifunctional protein GlmU.